The sequence spans 245 residues: Carboxymethylenebutenolidase homolog (245 aa).

Ala-2 carries the post-translational modification N-acetylalanine. Catalysis depends on residues Cys-132, Asp-179, and His-212. Ser-223 carries the phosphoserine modification.

This sequence belongs to the dienelactone hydrolase family.

Its subcellular location is the cytoplasm. The protein localises to the cytosol. Functionally, cysteine hydrolase. The polypeptide is Carboxymethylenebutenolidase homolog (Cmbl) (Rattus norvegicus (Rat)).